The following is a 241-amino-acid chain: Endothelial protein C receptor (241 aa).

A signal peptide spans 1–20; that stretch reads MLTKFLSLLLLLLLLGCAFC. The Extracellular segment spans residues 21-213; sequence NSDGSQSLHM…GSQTGRSYTS (193 aa). N-linked (GlcNAc...) asparagine glycans are attached at residues Asn-47, Asn-64, Asn-139, Asn-165, and Asn-175. Residues 214–234 traverse the membrane as a helical segment; it reads LVLGILMGCFIIAGVAVGIFL. Residues 235–241 are Cytoplasmic-facing; sequence CTGGRRC.

Its subcellular location is the membrane. Binds activated protein C. Enhances protein C activation by the thrombin-thrombomodulin complex; plays a role in the protein C pathway controlling blood coagulation. The sequence is that of Endothelial protein C receptor (Procr) from Rattus norvegicus (Rat).